A 508-amino-acid chain; its full sequence is Lysine--tRNA ligase (508 aa).

2 residues coordinate Mg(2+): Glu-403 and Glu-410.

It belongs to the class-II aminoacyl-tRNA synthetase family. In terms of assembly, homodimer. It depends on Mg(2+) as a cofactor.

Its subcellular location is the cytoplasm. It catalyses the reaction tRNA(Lys) + L-lysine + ATP = L-lysyl-tRNA(Lys) + AMP + diphosphate. In Methanoculleus marisnigri (strain ATCC 35101 / DSM 1498 / JR1), this protein is Lysine--tRNA ligase.